A 976-amino-acid polypeptide reads, in one-letter code: Collagen alpha-1(I) chain (976 aa).

Position 1 is a phosphoserine (S1). The tract at residues 1-976 is disordered; sequence SAGGISVPGP…PGPPGPPGPP (976 aa). 11 positions are modified to 4-hydroxyproline: P20, P23, P26, P35, P38, P41, P55, P70, P76, P85, and P91. Basic and acidic residues predominate over residues 58-72; it reads NGDDGEAGKPGRPGE. K94 carries the 5-hydroxylysine; alternate modification. The O-linked (Gal...) hydroxylysine; alternate glycan is linked to K94. A Phosphoserine modification is found at S100. Low complexity-rich tracts occupy residues 108-118 and 132-150; these read DAGPAGPKGAP and PGAS…TGAA. P118, P132, P153, P162, P165, P192, P195, P207, P213, P222, P228, P231, and P246 each carry 4-hydroxyproline. Over residues 152–164 the composition is skewed to pro residues; sequence PPGPTGPAGPPGF. Residues 198-237 are compositionally biased toward low complexity; that stretch reads AGAAGPAGNPGADGQPGAKGANGAPGIAGAPGFPGARGPS. A 5-hydroxylysine modification is found at K249. Residues P255, P258, P266, P275, P290, P296, P304, and P310 each carry the 4-hydroxyproline modification. Positions 294–308 are enriched in gly residues; the sequence is GLPGPGERGGPGSRG. At K319 the chain carries 5-hydroxylysine. 4-hydroxyproline is present on residues P328, P337, P343, P349, P358, P361, P370, P379, P385, P397, P406, P415, P418, P436, P453, P459, P465, P471, P477, P483, P495, P504, P517, P523, and P532. A compositionally biased stretch (low complexity) spans 352-378; it reads KGLTGSPGSPGPDGKTGPPGPAGQDGR. The segment covering 387-406 has biased composition (low complexity); sequence ARGQAGVMGFPGPKGAAGEP. A compositionally biased stretch (low complexity) spans 465-474; it reads PGEAGKPGEQ. Residue K544 is modified to 5-hydroxylysine. 4-hydroxyproline is present on residues P550, P565, and P571. Over residues 577-591 the composition is skewed to low complexity; it reads SGPSGPAGPTGARGA. At S580 the chain carries Phosphoserine. 8 positions are modified to 4-hydroxyproline: P592, P598, P601, P610, P616, P634, P643, and P652. Residues 604 to 631 are compositionally biased toward low complexity; the sequence is AGFAGPPGADGQPGAKGEPGDAGAKGDA. A 5-hydroxylysine modification is found at K655. Positions 660–676 are enriched in low complexity; the sequence is SAGPPGATGFPGAAGRV. 4-hydroxyproline is present on residues P664 and P670. P678 bears the 3-hydroxyproline mark. 4-hydroxyproline occurs at positions 679, 688, 691, 718, 726, 735, 753, 762, 765, 771, 786, 792, 798, 806, and 812. The span at 723–735 shows a compositional bias: low complexity; it reads KGSPGADGPAGAP. Pro residues predominate over residues 785-795; the sequence is PPGPMGPPGLA. Position 821 is a 5-hydroxylysine (K821). The span at 829 to 844 shows a compositional bias: pro residues; sequence PGPPGAPGAPGAPGPV. 3 positions are modified to 4-hydroxyproline: P832, P835, and P838. Low complexity predominate over residues 864-878; the sequence is AGPAGARGPAGPQGP. Residues 879–893 show a composition bias toward basic and acidic residues; it reads RGDKGETGEQGDRGI. A 5-hydroxylysine modification is found at K882. K894 is modified (5-hydroxylysine; alternate). K894 carries an O-linked (Gal...) hydroxylysine; alternate glycan. A 4-hydroxyproline mark is found at P907, P910, P928, and P943. Positions 910-943 are enriched in low complexity; the sequence is PGEQGPSGASGPAGPRGPPGSAGSPGKDGLNGLP. P948 is subject to 3-hydroxyproline. At P949 the chain carries 4-hydroxyproline. Pro residues predominate over residues 961-976; it reads VGPPGPPGPPGPPGPP. P963 carries the 3-hydroxyproline modification. Position 964 is a 4-hydroxyproline (P964). 3-hydroxyproline is present on P966. At P967 the chain carries 4-hydroxyproline. P969 is subject to 3-hydroxyproline. 4-hydroxyproline is present on residues P970, P973, and P976.

It belongs to the fibrillar collagen family. As to quaternary structure, trimers of one alpha 2(I) and two alpha 1(I) chains. Contains mostly 4-hydroxyproline. Proline residues at the third position of the tripeptide repeating unit (G-X-Y) are hydroxylated in some or all of the chains. Post-translationally, contains 3-hydroxyproline at a few sites. This modification occurs on the first proline residue in the sequence motif Gly-Pro-Hyp, where Hyp is 4-hydroxyproline. In terms of processing, lysine residues at the third position of the tripeptide repeating unit (G-X-Y) are 5-hydroxylated in some or all of the chains. O-glycosylated on hydroxylated lysine residues. The O-linked glycan consists of a Glc-Gal disaccharide. Expressed in bones.

It is found in the secreted. It localises to the extracellular space. The protein resides in the extracellular matrix. Its function is as follows. Type I collagen is a member of group I collagen (fibrillar forming collagen). In Acratocnus ye (Hispaniolan ground sloth), this protein is Collagen alpha-1(I) chain.